Consider the following 551-residue polypeptide: Interleukin-2 receptor subunit beta (551 aa).

Positions 1–26 (MAAPALSWRLPLLILLLPLATSWASA) are cleaved as a signal peptide. Residues 27–240 (AVNGTSQFTC…TKPAALGKDT (214 aa)) lie on the Extracellular side of the membrane. Residues Asn-29, Asn-43, and Asn-71 are each glycosylated (N-linked (GlcNAc...) asparagine). Intrachain disulfides connect Cys-36-Cys-46, Cys-59-Cys-110, and Cys-74-Cys-86. The 101-residue stretch at 134-234 (APISLQVVHV…QPLAFRTKPA (101 aa)) folds into the Fibronectin type-III domain. The N-linked (GlcNAc...) asparagine glycan is linked to Asn-149. The WSXWS motif signature appears at 220-224 (WSPWS). Residues 241 to 265 (IPWLGHLLVGLSGAFGFIILVYLLI) form a helical membrane-spanning segment. The Cytoplasmic portion of the chain corresponds to 266–551 (NCRNTGPWLK…LQGQDPTHLV (286 aa)). The Box 1 motif signature appears at 278–286 (LKCNTPDPS). Disordered stretches follow at residues 389-416 (EEDP…GEDD) and 432-486 (PSLL…VDFQ).

The protein belongs to the type I cytokine receptor family. Type 4 subfamily. In terms of assembly, non-covalent dimer of an alpha and a beta subunit. IL2R exists in 3 different forms: a high affinity dimer, an intermediate affinity monomer (beta subunit), and a low affinity monomer (alpha subunit). The high and intermediate affinity forms also associate with a gamma subunit. Interacts with SHB upon interleukin stimulation. (Microbial infection) Interacts with HTLV-1 accessory protein p12I.

The protein localises to the cell membrane. Its function is as follows. Receptor for interleukin-2. This beta subunit is involved in receptor mediated endocytosis and transduces the mitogenic signals of IL2. Probably in association with IL15RA, involved in the stimulation of neutrophil phagocytosis by IL15. This is Interleukin-2 receptor subunit beta from Homo sapiens (Human).